A 361-amino-acid chain; its full sequence is Phosphoserine aminotransferase (361 aa).

S9 and R42 together coordinate L-glutamate. Pyridoxal 5'-phosphate is bound by residues 76–77 (AR), W102, T153, D173, and Q196. K197 bears the N6-(pyridoxal phosphate)lysine mark. Residue 238-239 (NT) coordinates pyridoxal 5'-phosphate.

The protein belongs to the class-V pyridoxal-phosphate-dependent aminotransferase family. SerC subfamily. As to quaternary structure, homodimer. Pyridoxal 5'-phosphate is required as a cofactor.

The protein localises to the cytoplasm. The enzyme catalyses O-phospho-L-serine + 2-oxoglutarate = 3-phosphooxypyruvate + L-glutamate. It catalyses the reaction 4-(phosphooxy)-L-threonine + 2-oxoglutarate = (R)-3-hydroxy-2-oxo-4-phosphooxybutanoate + L-glutamate. It functions in the pathway amino-acid biosynthesis; L-serine biosynthesis; L-serine from 3-phospho-D-glycerate: step 2/3. It participates in cofactor biosynthesis; pyridoxine 5'-phosphate biosynthesis; pyridoxine 5'-phosphate from D-erythrose 4-phosphate: step 3/5. Catalyzes the reversible conversion of 3-phosphohydroxypyruvate to phosphoserine and of 3-hydroxy-2-oxo-4-phosphonooxybutanoate to phosphohydroxythreonine. The polypeptide is Phosphoserine aminotransferase (Erwinia tasmaniensis (strain DSM 17950 / CFBP 7177 / CIP 109463 / NCPPB 4357 / Et1/99)).